The chain runs to 157 residues: Small ribosomal subunit protein uS9 (157 aa).

This sequence belongs to the universal ribosomal protein uS9 family.

In Caulobacter sp. (strain K31), this protein is Small ribosomal subunit protein uS9.